A 533-amino-acid chain; its full sequence is Flavin-containing monooxygenase 5 (533 aa).

Arg5 is subject to Dimethylated arginine. FAD is bound by residues 10–14 (GAGAS), Glu33, and 41–42 (LW). Ser54 is modified (phosphoserine). Residue Tyr56 is modified to Phosphotyrosine. The residue at position 58 (Ser58) is a Phosphoserine. 62–63 (NT) contributes to the FAD binding site. 196-199 (SGGD) lines the NADP(+) pocket. At Ser280 the chain carries Phosphoserine. Position 284 is a phosphothreonine (Thr284). Position 401 is a phosphoserine (Ser401). A helical transmembrane segment spans residues 513–533 (MMTMGKFMLAIAFLAIAVVYF).

The protein belongs to the FMO family. Requires FAD as cofactor. As to expression, kidney and liver.

It is found in the microsome membrane. The protein localises to the endoplasmic reticulum membrane. The catalysed reaction is N,N-dimethylaniline + NADPH + O2 + H(+) = N,N-dimethylaniline N-oxide + NADP(+) + H2O. The enzyme catalyses NADPH + O2 + H(+) = H2O2 + NADP(+). It catalyses the reaction heptan-2-one + NADPH + O2 + H(+) = pentyl acetate + NADP(+) + H2O. It carries out the reaction octan-3-one + NADPH + O2 + H(+) = pentyl propanoate + NADP(+) + H2O. The catalysed reaction is octan-3-one + NADPH + O2 + H(+) = ethyl hexanoate + NADP(+) + H2O. The enzyme catalyses hexan-3-one + NADPH + O2 + H(+) = ethyl butanoate + NADP(+) + H2O. It catalyses the reaction hexan-3-one + NADPH + O2 + H(+) = propyl propanoate + NADP(+) + H2O. It carries out the reaction heptan-4-one + NADPH + O2 + H(+) = propyl butanoate + NADP(+) + H2O. The catalysed reaction is (2E)-geranial + NADPH + O2 + H(+) = (1E)-2,6-dimethylhepta-1,5-dien-1-yl formate + NADP(+) + H2O. The enzyme catalyses sulcatone + NADPH + O2 + H(+) = 4-methylpent-3-en-1-yl acetate + NADP(+) + H2O. In terms of biological role, acts as a Baeyer-Villiger monooxygenase on a broad range of substrates. Catalyzes the insertion of an oxygen atom into a carbon-carbon bond adjacent to a carbonyl, which converts ketones to esters. Active on diverse carbonyl compounds, whereas soft nucleophiles are mostly non- or poorly reactive. In contrast with other forms of FMO it is non- or poorly active on 'classical' substrates such as drugs, pesticides, and dietary components containing soft nucleophilic heteroatoms. Able to oxidize drug molecules bearing a carbonyl group on an aliphatic chain, such as nabumetone and pentoxifylline. Also, in the absence of substrates, shows slow but yet significant NADPH oxidase activity. Acts as a positive modulator of cholesterol biosynthesis as well as glucose homeostasis, promoting metabolic aging via pleiotropic effects. The chain is Flavin-containing monooxygenase 5 (FMO5) from Oryctolagus cuniculus (Rabbit).